The chain runs to 346 residues: Mannonate dehydratase (346 aa).

Belongs to the mannonate dehydratase family. The cofactor is Fe(2+). Requires Mn(2+) as cofactor.

The enzyme catalyses D-mannonate = 2-dehydro-3-deoxy-D-gluconate + H2O. It participates in carbohydrate metabolism; pentose and glucuronate interconversion. Functionally, catalyzes the dehydration of D-mannonate. This Cupriavidus taiwanensis (strain DSM 17343 / BCRC 17206 / CCUG 44338 / CIP 107171 / LMG 19424 / R1) (Ralstonia taiwanensis (strain LMG 19424)) protein is Mannonate dehydratase.